The sequence spans 65 residues: Hirudin-2 (65 aa).

The interaction with thrombin active site stretch occupies residues Ile-1 to Tyr-3. 3 disulfides stabilise this stretch: Cys-6/Cys-14, Cys-16/Cys-28, and Cys-22/Cys-39. Positions Cys-39–Gln-65 are disordered. Thr-45 carries O-linked (GalNAc...) threonine glycosylation. The segment at Asp-55–Gln-65 is interaction with fibrinogen-binding exosite of thrombin. The segment covering Asp-55 to Gln-65 has biased composition (acidic residues). At Tyr-63 the chain carries Sulfotyrosine.

It belongs to the protease inhibitor I14 (hirudin) family.

Its subcellular location is the secreted. In terms of biological role, hirudin is a potent thrombin-specific protease inhibitor. It forms a stable non-covalent complex with alpha-thrombin, thereby abolishing its ability to cleave fibrinogen. This Hirudo medicinalis (Medicinal leech) protein is Hirudin-2.